The primary structure comprises 200 residues: MASKIETLKANLEAALGARVVSLTEAIGELTLVVKASDYLEVAKTLRDDPKLRFEQLIDLCGIDYQTYGDGAYDGPRFAAVSQLLSVTNNWRLRLRVFAPDDDLPIVPSLVDTWSSSNWYEREAFDLYGLVFEGHPDLRRLLTDYGFIGHPFRKDFPVSGYVEMRYDPEEKRVVYQPVTIEPREITPRVIREDRYGGLKH.

This sequence belongs to the complex I 30 kDa subunit family. In terms of assembly, NDH-1 is composed of 14 different subunits. Subunits NuoB, C, D, E, F, and G constitute the peripheral sector of the complex.

The protein resides in the cell inner membrane. It carries out the reaction a quinone + NADH + 5 H(+)(in) = a quinol + NAD(+) + 4 H(+)(out). Functionally, NDH-1 shuttles electrons from NADH, via FMN and iron-sulfur (Fe-S) centers, to quinones in the respiratory chain. The immediate electron acceptor for the enzyme in this species is believed to be ubiquinone. Couples the redox reaction to proton translocation (for every two electrons transferred, four hydrogen ions are translocated across the cytoplasmic membrane), and thus conserves the redox energy in a proton gradient. In Burkholderia vietnamiensis (strain G4 / LMG 22486) (Burkholderia cepacia (strain R1808)), this protein is NADH-quinone oxidoreductase subunit C.